The sequence spans 425 residues: Aromatic prenyl transferase ptmE (425 aa).

L-tryptophan contacts are provided by residues 83–84 and Glu92; that span reads GI. The substrate site is built by Arg107, Lys198, Tyr200, Arg265, Lys267, Tyr269, Tyr345, Tyr410, and Tyr414.

This sequence belongs to the tryptophan dimethylallyltransferase family. In terms of assembly, homodimer.

It participates in secondary metabolite biosynthesis. Functionally, aromatic prenyl transferase; part of the gene cluster that mediates the biosynthesis of the indole diterpenes penitrems. The geranylgeranyl diphosphate (GGPP) synthase ptmG catalyzes the first step in penitrem biosynthesis via conversion of farnesyl pyrophosphate and isopentyl pyrophosphate into geranylgeranyl pyrophosphate (GGPP). Condensation of indole-3-glycerol phosphate with GGPP by the prenyl transferase ptmC then forms 3-geranylgeranylindole (3-GGI). Epoxidation by the FAD-dependent monooxygenase ptmM leads to a epoxidized-GGI that is substrate of the terpene cyclase ptmB for cyclization to yield paspaline. Paspaline is subsequently converted to 13-desoxypaxilline by the cytochrome P450 monooxygenase ptmP, the latter being then converted to paxilline by the cytochrome P450 monooxygenase ptmQ. Paxilline is converted to beta-paxitriol via C-10 ketoreduction by the short-chain dehydrogenase ptmH which can be monoprenylated at the C-20 by the indole diterpene prenyltransferase ptmD. A two-step elimination (acetylation and elimination) process performed by the O-acetyltransferase ptmV and ptmI leads to the production of the prenylated form of penijanthine. The FAD-linked oxidoreductase ptmO then converts the prenylated form of penijanthine into PC-M5 which is in turn transformed into PC-M4 by the aromatic dimethylallyltransferase ptmE. Five sequential oxidative transformations performed by the cytochrome P450 monooxygenases ptmK, ptmU, ptmL, ptmN and ptmJ yield the various penitrem compounds. PtmK, ptmU and ptmM are involved in the formation of the key bicyclic ring of penitrem C via the formation of the intermediates secopenitrem D and penitrem D. PtmL catalyzes the epoxidation of penitrem D and C to yield penitrem B and F, respectively. PtmJ catalyzes the last benzylic hydroxylation to convert penitrem B to prenitrem E and penitrem F to penitrem A. The sequence is that of Aromatic prenyl transferase ptmE from Penicillium ochrochloron.